A 513-amino-acid polypeptide reads, in one-letter code: Galactose-1-phosphate uridylyltransferase (513 aa).

The protein belongs to the galactose-1-phosphate uridylyltransferase type 2 family.

The protein localises to the cytoplasm. The enzyme catalyses alpha-D-galactose 1-phosphate + UDP-alpha-D-glucose = alpha-D-glucose 1-phosphate + UDP-alpha-D-galactose. The protein operates within carbohydrate metabolism; galactose metabolism. The protein is Galactose-1-phosphate uridylyltransferase (galT) of Bacillus subtilis (strain 168).